The sequence spans 345 residues: Ferrochelatase (345 aa).

2 residues coordinate Fe cation: H215 and E296.

The protein belongs to the ferrochelatase family.

The protein localises to the cytoplasm. The catalysed reaction is heme b + 2 H(+) = protoporphyrin IX + Fe(2+). It functions in the pathway porphyrin-containing compound metabolism; protoheme biosynthesis; protoheme from protoporphyrin-IX: step 1/1. Its function is as follows. Catalyzes the ferrous insertion into protoporphyrin IX. Essential for normal nodule development. This Bradyrhizobium diazoefficiens (strain JCM 10833 / BCRC 13528 / IAM 13628 / NBRC 14792 / USDA 110) protein is Ferrochelatase.